The following is a 158-amino-acid chain: 6,7-dimethyl-8-ribityllumazine synthase (158 aa).

Residues Phe23, 61-63, and 85-87 each bind 5-amino-6-(D-ribitylamino)uracil; these read SFE and AVI. Position 90–91 (90–91) interacts with (2S)-2-hydroxy-3-oxobutyl phosphate; the sequence is ET. Residue His93 is the Proton donor of the active site. Phe118 contributes to the 5-amino-6-(D-ribitylamino)uracil binding site. Arg132 is a (2S)-2-hydroxy-3-oxobutyl phosphate binding site.

This sequence belongs to the DMRL synthase family.

It carries out the reaction (2S)-2-hydroxy-3-oxobutyl phosphate + 5-amino-6-(D-ribitylamino)uracil = 6,7-dimethyl-8-(1-D-ribityl)lumazine + phosphate + 2 H2O + H(+). The protein operates within cofactor biosynthesis; riboflavin biosynthesis; riboflavin from 2-hydroxy-3-oxobutyl phosphate and 5-amino-6-(D-ribitylamino)uracil: step 1/2. In terms of biological role, catalyzes the formation of 6,7-dimethyl-8-ribityllumazine by condensation of 5-amino-6-(D-ribitylamino)uracil with 3,4-dihydroxy-2-butanone 4-phosphate. This is the penultimate step in the biosynthesis of riboflavin. The polypeptide is 6,7-dimethyl-8-ribityllumazine synthase (Prochlorococcus marinus (strain AS9601)).